Reading from the N-terminus, the 329-residue chain is Olfactory receptor 10J3 (329 aa).

Residues Met1–Leu26 are Extracellular-facing. An N-linked (GlcNAc...) asparagine glycan is attached at Asn5. Residues Val27 to Met47 form a helical membrane-spanning segment. The Cytoplasmic portion of the chain corresponds to Thr48–His55. The helical transmembrane segment at Leu56–Val76 threads the bilayer. The Extracellular segment spans residues Ala77 to Thr100. A disulfide bridge connects residues Cys98 and Cys190. Residues Gln101–Tyr121 form a helical membrane-spanning segment. The Cytoplasmic segment spans residues Asp122–Arg140. The helical transmembrane segment at Ala141–Val161 threads the bilayer. The Extracellular portion of the chain corresponds to Thr162–Ile198. Residues Ile199–Ser218 form a helical membrane-spanning segment. Residues Tyr219–Ala238 are Cytoplasmic-facing. The helical transmembrane segment at Phe239–Ile259 threads the bilayer. The Extracellular segment spans residues Tyr260–Asp272. Residues Arg273–Glu293 traverse the membrane as a helical segment. The Cytoplasmic segment spans residues Glu294–Tyr329.

It belongs to the G-protein coupled receptor 1 family.

It is found in the cell membrane. Its function is as follows. Odorant receptor. The sequence is that of Olfactory receptor 10J3 (OR10J3) from Homo sapiens (Human).